The following is a 433-amino-acid chain: Tol-Pal system protein TolB (433 aa).

A signal peptide spans 1–26; that stretch reads MSLMTKLGFRALVASCLIAAGGAAHA.

The protein belongs to the TolB family. The Tol-Pal system is composed of five core proteins: the inner membrane proteins TolA, TolQ and TolR, the periplasmic protein TolB and the outer membrane protein Pal. They form a network linking the inner and outer membranes and the peptidoglycan layer.

It is found in the periplasm. Its function is as follows. Part of the Tol-Pal system, which plays a role in outer membrane invagination during cell division and is important for maintaining outer membrane integrity. The polypeptide is Tol-Pal system protein TolB (Burkholderia pseudomallei (strain 1710b)).